The primary structure comprises 133 residues: FK506-binding protein 2 (133 aa).

Positions 1–20 (MKLLYCLLLVILALVGLSSG) are cleaved as a signal peptide. The PPIase FKBP-type domain occupies 45 to 133 (GDKLKIHYTG…IFDVELIGIN (89 aa)).

The protein belongs to the FKBP-type PPIase family.

It carries out the reaction [protein]-peptidylproline (omega=180) = [protein]-peptidylproline (omega=0). With respect to regulation, inhibited by both FK506 and rapamycin. Functionally, PPIases accelerate the folding of proteins by catalyzing the cis-trans isomerization of proline imidic peptide bonds in oligopeptides. The sequence is that of FK506-binding protein 2 (fkbp2) from Dictyostelium discoideum (Social amoeba).